Reading from the N-terminus, the 260-residue chain is RxLR effector protein BLR38 (260 aa).

A signal peptide spans 1–18; sequence MHCTVFFLLIACAKSSYG. The short motif at 46-49 is the RxLR element; it reads RLLR. The Nuclear localuization signal (NLS) signature appears at 136-148; sequence MPSSRKRPRALDE.

This sequence belongs to the RxLR effector family.

The protein resides in the secreted. The protein localises to the host nucleus. Functionally, secreted effector that triggers a robust hypersensitive response (HR) in Lactuca serriola LS102. The response to BLN06 was visible as strong necrosis. Although effector recognition is frequently associated with single dominant R gene loci, the recognition of BLR38 requires 2 unlinked loci that display incomplete dominance. In Bremia lactucae (Lettuce downy mildew), this protein is RxLR effector protein BLR38.